Consider the following 407-residue polypeptide: Nuclear hormone receptor family member nhr-86 (407 aa).

The nuclear receptor DNA-binding region spans K21 to Q96. 2 consecutive NR C4-type zinc fingers follow at residues C24 to C44 and C60 to C79. One can recognise an NR LBD domain in the interval A130–K405. Residues P394–K405 are AF-2.

It belongs to the nuclear hormone receptor family. Expressed in intestinal epithelial cells, excretory gland cells and in several head neurons.

The protein resides in the nucleus. Its function is as follows. Nuclear receptor which acts as a transcription activator. Binds small molecule ligands, such as phenazine 1-carboxamide (PCN), a pathogen-derived metabolite, leading to modulation of innate immune responses against virulent pathogens. On exposure to exogenous PCN, P.aeruginosa and other xenobiotic immunostimulant such as R24, activates immune response genes, including irg-4, irg-5, mul-1, drd-50, cyp-35C1 and ugt-30, probably via direct interaction with their promoters, and independent of the p38 MAPK pmk-1 pathway. Exhibits higher affinity to R24 than PCN and thus induces stronger immune response. Binds its own promoter thereby autoregulating its expression in the head hypodermis and the pharynx. Possibly plays a role in lipid storage or catabolism. The sequence is that of Nuclear hormone receptor family member nhr-86 (nhr-86) from Caenorhabditis elegans.